Here is a 439-residue protein sequence, read N- to C-terminus: AT-hook motif nuclear-localized protein 13 (439 aa).

3 disordered regions span residues 1 to 46 (MDSR…NSYN), 69 to 216 (QRLP…LGGT), and 342 to 439 (GRKQ…NSPQ). Low complexity-rich tracts occupy residues 9–31 (QQQQ…QQQQ) and 79–95 (PHQP…PQQQ). Positions 109-120 (SPSSVAATQQHS) are enriched in polar residues. Basic residues predominate over residues 130-139 (VKKKRGRPRK). A Bipartite nuclear localization signal motif is present at residues 131–139 (KKKRGRPRK). A DNA-binding region (a.T hook 1) is located at residues 131–143 (KKKRGRPRKYAAD). Gly residues-rich tracts occupy residues 143–152 (DGGGGGGGGS) and 171–183 (YGGG…GGDS). A DNA-binding region (a.T hook 2) is located at residues 196–208 (KRNRGRPPGSGKK). Residues 217 to 359 (GGVGFTPHVI…GRAQNTPEPA (143 aa)) enclose the PPC domain. Residues 347–357 (QSAGRAQNTPE) are compositionally biased toward polar residues. Low complexity-rich tracts occupy residues 376-386 (SPRSQGQQHSS) and 403-416 (NNNN…FGNS). Positions 428–439 (MYQNLWPGNSPQ) are enriched in polar residues.

It is found in the nucleus. Functionally, transcription factor that specifically binds AT-rich DNA sequences related to the nuclear matrix attachment regions (MARs). The polypeptide is AT-hook motif nuclear-localized protein 13 (Arabidopsis thaliana (Mouse-ear cress)).